Reading from the N-terminus, the 1030-residue chain is Translation initiation factor IF-2 (1030 aa).

2 stretches are compositionally biased toward low complexity: residues 56-69 (APSEPVAAASAADS) and 111-132 (PNIVAPPRRPAAANEPAKAPIK). Disordered regions lie at residues 56–361 (APSE…KRRQ) and 394–434 (SKPK…REQK). Over residues 134–144 (ARPEKSAEKPE) the composition is skewed to basic and acidic residues. A compositionally biased stretch (low complexity) spans 154-164 (AASAEPAKSPS). Basic and acidic residues predominate over residues 188–206 (LLRKPEIVRRSEAKPERTS). Residues 259 to 273 (VAASASGVPAAASRV) are compositionally biased toward low complexity. In terms of domain architecture, tr-type G spans 522–695 (TRPPVVTVMG…LLVTEVEELV (174 aa)). The tract at residues 531–538 (GHVDHGKT) is G1. Residue 531-538 (GHVDHGKT) coordinates GTP. Residues 556–560 (GITQH) form a G2 region. The interval 581-584 (DTPG) is G3. GTP is bound by residues 581-585 (DTPGH) and 635-638 (NKCD). Residues 635 to 638 (NKCD) form a G4 region. Residues 671-673 (SAI) form a G5 region.

This sequence belongs to the TRAFAC class translation factor GTPase superfamily. Classic translation factor GTPase family. IF-2 subfamily.

The protein localises to the cytoplasm. One of the essential components for the initiation of protein synthesis. Protects formylmethionyl-tRNA from spontaneous hydrolysis and promotes its binding to the 30S ribosomal subunits. Also involved in the hydrolysis of GTP during the formation of the 70S ribosomal complex. The protein is Translation initiation factor IF-2 of Synechococcus elongatus (strain ATCC 33912 / PCC 7942 / FACHB-805) (Anacystis nidulans R2).